The following is a 232-amino-acid chain: RNA chaperone ProQ (232 aa).

Positions 105-182 (EAKARVQAQR…REEQHTPVSD (78 aa)) are disordered. The segment covering 117 to 136 (QQAKKREAAAAAGEKEDAPR) has biased composition (basic and acidic residues). A compositionally biased stretch (basic residues) spans 137-146 (RERKPRPTTP). The span at 147–177 (RRKEGAERKPRSQKPVEKAPKTVKAPREEQH) shows a compositional bias: basic and acidic residues.

Belongs to the ProQ family.

Its subcellular location is the cytoplasm. In terms of biological role, RNA chaperone with significant RNA binding, RNA strand exchange and RNA duplexing activities. May regulate ProP activity through an RNA-based, post-transcriptional mechanism. This is RNA chaperone ProQ from Escherichia coli (strain UTI89 / UPEC).